The sequence spans 295 residues: MDQKQIEEIVRSVMASMGQAAPAPSEAKCAATTCAAPVTSESCALDLGSAEAKAWIGVENPHRADVLTELRRSTVARVCTGRAGPRPRTQALLRFLADHSRSKDTVLKEVPEEWVKAQGLLEVRSEISNKNLYLTRPDMGRRLCAEAVEALKAQCVANPDVQVVISDGLSTDAITVNYEEILPPLMAGLKQAGLKVGTPFFVRYGRVKIEDQIGEILGAKVVILLVGERPGLGQSESLSCYAVYSPRMATTVEADRTCISNIHQGGTPPVEAAAVIVDLAKRMLEQKASGINMTR.

Adenosylcob(III)alamin is bound by residues Val207, Glu228, and Cys258.

This sequence belongs to the EutC family. As to quaternary structure, the basic unit is a heterodimer which dimerizes to form tetramers. The heterotetramers trimerize; 6 large subunits form a core ring with 6 small subunits projecting outwards. It depends on adenosylcob(III)alamin as a cofactor.

Its subcellular location is the bacterial microcompartment. It catalyses the reaction ethanolamine = acetaldehyde + NH4(+). It functions in the pathway amine and polyamine degradation; ethanolamine degradation. In terms of biological role, catalyzes the deamination of various vicinal amino-alcohols to oxo compounds. Allows this organism to utilize ethanolamine as the sole source of nitrogen and carbon in the presence of external vitamin B12. The polypeptide is Ethanolamine ammonia-lyase small subunit (Escherichia coli (strain SE11)).